Consider the following 400-residue polypeptide: Deoxyguanosinetriphosphate triphosphohydrolase-like protein (400 aa).

The HD domain occupies 76–204; that stretch reads RLTHTLEVAQ…VNIADPLAYC (129 aa).

This sequence belongs to the dGTPase family. Type 2 subfamily.

The protein is Deoxyguanosinetriphosphate triphosphohydrolase-like protein of Syntrophus aciditrophicus (strain SB).